Here is a 985-residue protein sequence, read N- to C-terminus: Protein psiQ (985 aa).

A signal peptide spans 1-20 (MMKYIYILLIFSLLFLKINS). A PA14 domain is found at 102–247 (QSTTNPNVYA…YDECGVCQGD (146 aa)). N-linked (GlcNAc...) asparagine glycosylation is found at Asn127, Asn309, Asn424, Asn491, Asn517, Asn527, Asn592, Asn620, Asn649, Asn696, Asn735, Asn767, Asn786, Asn824, and Asn842.

It belongs to the prespore-cell-inducing factor family.

It localises to the secreted. The polypeptide is Protein psiQ (psiQ) (Dictyostelium discoideum (Social amoeba)).